We begin with the raw amino-acid sequence, 188 residues long: Elongation factor P (188 aa).

This sequence belongs to the elongation factor P family.

It is found in the cytoplasm. It functions in the pathway protein biosynthesis; polypeptide chain elongation. Its function is as follows. Involved in peptide bond synthesis. Stimulates efficient translation and peptide-bond synthesis on native or reconstituted 70S ribosomes in vitro. Probably functions indirectly by altering the affinity of the ribosome for aminoacyl-tRNA, thus increasing their reactivity as acceptors for peptidyl transferase. The chain is Elongation factor P from Chlorobaculum parvum (strain DSM 263 / NCIMB 8327) (Chlorobium vibrioforme subsp. thiosulfatophilum).